The primary structure comprises 247 residues: Malonyl-[acyl-carrier protein] O-methyltransferase (247 aa).

This sequence belongs to the methyltransferase superfamily.

It carries out the reaction malonyl-[ACP] + S-adenosyl-L-methionine = malonyl-[ACP] methyl ester + S-adenosyl-L-homocysteine. It participates in cofactor biosynthesis; biotin biosynthesis. Converts the free carboxyl group of a malonyl-thioester to its methyl ester by transfer of a methyl group from S-adenosyl-L-methionine (SAM). It allows to synthesize pimeloyl-ACP via the fatty acid synthetic pathway. The protein is Malonyl-[acyl-carrier protein] O-methyltransferase of Buchnera aphidicola subsp. Baizongia pistaciae (strain Bp).